The primary structure comprises 469 residues: Proline--tRNA ligase (469 aa).

Belongs to the class-II aminoacyl-tRNA synthetase family. ProS type 3 subfamily. In terms of assembly, homodimer.

It localises to the cytoplasm. The enzyme catalyses tRNA(Pro) + L-proline + ATP = L-prolyl-tRNA(Pro) + AMP + diphosphate. Its function is as follows. Catalyzes the attachment of proline to tRNA(Pro) in a two-step reaction: proline is first activated by ATP to form Pro-AMP and then transferred to the acceptor end of tRNA(Pro). The protein is Proline--tRNA ligase of Methanobrevibacter smithii (strain ATCC 35061 / DSM 861 / OCM 144 / PS).